Here is a 179-residue protein sequence, read N- to C-terminus: Large ribosomal subunit protein uL5 (179 aa).

It belongs to the universal ribosomal protein uL5 family. In terms of assembly, part of the 50S ribosomal subunit; part of the 5S rRNA/L5/L18/L25 subcomplex. Contacts the 5S rRNA and the P site tRNA. Forms a bridge to the 30S subunit in the 70S ribosome.

Its function is as follows. This is one of the proteins that bind and probably mediate the attachment of the 5S RNA into the large ribosomal subunit, where it forms part of the central protuberance. In the 70S ribosome it contacts protein S13 of the 30S subunit (bridge B1b), connecting the 2 subunits; this bridge is implicated in subunit movement. Contacts the P site tRNA; the 5S rRNA and some of its associated proteins might help stabilize positioning of ribosome-bound tRNAs. The sequence is that of Large ribosomal subunit protein uL5 from Herpetosiphon aurantiacus (strain ATCC 23779 / DSM 785 / 114-95).